A 321-amino-acid chain; its full sequence is Photosystem II assembly factor Ycf39 (321 aa).

The protein belongs to the NmrA-type oxidoreductase family. Ycf39 subfamily.

The protein resides in the plastid. It is found in the cyanelle. Its function is as follows. Involved in assembly of photosystem II. In Cyanophora paradoxa, this protein is Photosystem II assembly factor Ycf39 (ycf39).